Here is a 131-residue protein sequence, read N- to C-terminus: Phosphoribosyl-AMP cyclohydrolase (131 aa).

A Mg(2+)-binding site is contributed by Asp89. Cys90 lines the Zn(2+) pocket. Residues Asp91 and Asp93 each contribute to the Mg(2+) site. Positions 106 and 113 each coordinate Zn(2+).

This sequence belongs to the PRA-CH family. Homodimer. Mg(2+) is required as a cofactor. It depends on Zn(2+) as a cofactor.

It is found in the cytoplasm. The catalysed reaction is 1-(5-phospho-beta-D-ribosyl)-5'-AMP + H2O = 1-(5-phospho-beta-D-ribosyl)-5-[(5-phospho-beta-D-ribosylamino)methylideneamino]imidazole-4-carboxamide. The protein operates within amino-acid biosynthesis; L-histidine biosynthesis; L-histidine from 5-phospho-alpha-D-ribose 1-diphosphate: step 3/9. In terms of biological role, catalyzes the hydrolysis of the adenine ring of phosphoribosyl-AMP. The protein is Phosphoribosyl-AMP cyclohydrolase of Pyrobaculum aerophilum (strain ATCC 51768 / DSM 7523 / JCM 9630 / CIP 104966 / NBRC 100827 / IM2).